The primary structure comprises 358 residues: NADH-quinone oxidoreductase subunit H (358 aa).

The next 8 helical transmembrane spans lie at 30 to 50 (VVIG…LIYM), 96 to 116 (FLYN…FSCL), 129 to 149 (VGVF…LLAG), 168 to 188 (IISY…LMGT), 201 to 221 (GWFI…YLIA), 265 to 285 (FIVA…LHIV), 297 to 317 (IPGF…LMWI), and 336 to 356 (YLVP…VFGL).

This sequence belongs to the complex I subunit 1 family. In terms of assembly, NDH-1 is composed of 14 different subunits. Subunits NuoA, H, J, K, L, M, N constitute the membrane sector of the complex.

Its subcellular location is the cell inner membrane. It catalyses the reaction a quinone + NADH + 5 H(+)(in) = a quinol + NAD(+) + 4 H(+)(out). Functionally, NDH-1 shuttles electrons from NADH, via FMN and iron-sulfur (Fe-S) centers, to quinones in the respiratory chain. The immediate electron acceptor for the enzyme in this species is believed to be ubiquinone. Couples the redox reaction to proton translocation (for every two electrons transferred, four hydrogen ions are translocated across the cytoplasmic membrane), and thus conserves the redox energy in a proton gradient. This subunit may bind ubiquinone. The sequence is that of NADH-quinone oxidoreductase subunit H from Bacteroides fragilis (strain ATCC 25285 / DSM 2151 / CCUG 4856 / JCM 11019 / LMG 10263 / NCTC 9343 / Onslow / VPI 2553 / EN-2).